The chain runs to 359 residues: 3-dehydroquinate synthase (359 aa).

Residues 106–110 (GVVGD), 130–131 (TT), Lys-143, Lys-152, and 170–173 (TLQT) contribute to the NAD(+) site. Zn(2+)-binding residues include Glu-185, His-248, and His-265.

This sequence belongs to the sugar phosphate cyclases superfamily. Dehydroquinate synthase family. Co(2+) is required as a cofactor. The cofactor is Zn(2+). Requires NAD(+) as cofactor.

It is found in the cytoplasm. The enzyme catalyses 7-phospho-2-dehydro-3-deoxy-D-arabino-heptonate = 3-dehydroquinate + phosphate. The protein operates within metabolic intermediate biosynthesis; chorismate biosynthesis; chorismate from D-erythrose 4-phosphate and phosphoenolpyruvate: step 2/7. Its function is as follows. Catalyzes the conversion of 3-deoxy-D-arabino-heptulosonate 7-phosphate (DAHP) to dehydroquinate (DHQ). In Desulforamulus reducens (strain ATCC BAA-1160 / DSM 100696 / MI-1) (Desulfotomaculum reducens), this protein is 3-dehydroquinate synthase.